A 328-amino-acid chain; its full sequence is Malate dehydrogenase (328 aa).

11–17 lines the NAD(+) pocket; that stretch reads GAAGQIG. The substrate site is built by R94 and R100. Residues N107, Q114, and 131 to 133 contribute to the NAD(+) site; that span reads VGN. Substrate is bound by residues N133 and R164. The Proton acceptor role is filled by H189.

The protein belongs to the LDH/MDH superfamily. MDH type 2 family.

The enzyme catalyses (S)-malate + NAD(+) = oxaloacetate + NADH + H(+). Its function is as follows. Catalyzes the reversible oxidation of malate to oxaloacetate. In Xanthomonas oryzae pv. oryzae (strain PXO99A), this protein is Malate dehydrogenase.